A 6486-amino-acid chain; its full sequence is Tyrocidine synthase 3 (6486 aa).

The domain 1 (asparagine-activating) stretch occupies residues Ile466–Arg1038. 6 consecutive Carrier domains span residues Ala965–Glu1040, Ala2002–Arg2077, Ala3040–Gly3115, Ala4075–Ala4150, Ala5119–Ala5194, and Ala6162–Arg6237. An O-(pantetheine 4'-phosphoryl)serine mark is found at Ser1000, Ser2037, Ser3075, Ser4110, Ser5154, and Ser6197. A domain 2 (glutamine-activating) region spans residues Tyr1521–Ala2070. Residues Asn2536 to Thr3113 form a domain 3 (tyrosine-activating) region. Residues Glu3590–Ser4149 form a domain 4 (valine-activating) region. The segment at Tyr4606–Pro5203 is domain 5 (ornithine-activating). The domain 6 (leucine-activating) stretch occupies residues Leu5658–Ala6245.

Belongs to the ATP-dependent AMP-binding enzyme family. As to quaternary structure, large multienzyme complex of TycA, TycB and TycC. It depends on pantetheine 4'-phosphate as a cofactor.

Its pathway is antibiotic biosynthesis; tyrocidine biosynthesis. Incorporates six amino acids (for tyrocidine A, Asn, Gln, Tyr, Val, Orn, and Leu) in their L-configuration into the peptide product. This is Tyrocidine synthase 3 (tycC) from Brevibacillus parabrevis.